We begin with the raw amino-acid sequence, 424 residues long: Imidazolonepropionase (424 aa).

Positions 84 and 86 each coordinate Fe(3+). Residues His84 and His86 each contribute to the Zn(2+) site. 4-imidazolone-5-propanoate contacts are provided by Arg93, Tyr156, and His189. Tyr156 contacts N-formimidoyl-L-glutamate. His254 provides a ligand contact to Fe(3+). Residue His254 coordinates Zn(2+). A 4-imidazolone-5-propanoate-binding site is contributed by Glu257. A Fe(3+)-binding site is contributed by Asp328. A Zn(2+)-binding site is contributed by Asp328. Positions 330 and 332 each coordinate N-formimidoyl-L-glutamate. Ser333 contacts 4-imidazolone-5-propanoate.

Belongs to the metallo-dependent hydrolases superfamily. HutI family. Requires Zn(2+) as cofactor. Fe(3+) is required as a cofactor.

The protein localises to the cytoplasm. The enzyme catalyses 4-imidazolone-5-propanoate + H2O = N-formimidoyl-L-glutamate. It functions in the pathway amino-acid degradation; L-histidine degradation into L-glutamate; N-formimidoyl-L-glutamate from L-histidine: step 3/3. Catalyzes the hydrolytic cleavage of the carbon-nitrogen bond in imidazolone-5-propanoate to yield N-formimidoyl-L-glutamate. It is the third step in the universal histidine degradation pathway. This is Imidazolonepropionase from Geobacillus kaustophilus (strain HTA426).